The following is a 143-amino-acid chain: Transcription antitermination protein NusB (143 aa).

It belongs to the NusB family.

Functionally, involved in transcription antitermination. Required for transcription of ribosomal RNA (rRNA) genes. Binds specifically to the boxA antiterminator sequence of the ribosomal RNA (rrn) operons. This is Transcription antitermination protein NusB from Streptomyces griseus subsp. griseus (strain JCM 4626 / CBS 651.72 / NBRC 13350 / KCC S-0626 / ISP 5235).